Here is a 586-residue protein sequence, read N- to C-terminus: MKTRPQALGLGEPYPGRAHSLVVQIPTWADMVAFGQGKAAAQMNHGYPRSVVHPDIRSLGSTILAKIHHKTAEAAPSSSLLLFSGVKAALCCKHYILRCMQGRDQGVLEDCVRVYEVSFGSSCMCRDHHHHHHHDDAHSGSPTLYAVLYPSAAAADAHAFWQRTGPGISSRLAQHCLRLQQQGSGPRVGALPAAASTASPMGSSLPDSHPVYAELRRRIAGYAQHSADEPPMTQPVTAPDVFLYGSGMAAIYHVHQAILAWRSGMSVHAGLLYEPTLRILQTHGPGVRSYSLGTAAELDELAAHLEQERVSGSPCAVPAIWCECPSNPILQTVDLQRLRALADQHDLLVVVDDSVASFANVDLLGVADIVVSSLSKYFSGYADVMAGSAILNPRSRHHATLLNQMARTHENSLFVDDALRLERNSRDFPARMARINATTESLVQQLGPRVADPKCPLTRLLYPSRCTSRGYYEGQMRWSSSSSPGAESRPRPGYGGVFSMEFADCGCAAAFFDHLEVYKGLSFGADVCIAAAYVQMTGRQNAPGTAHETLIRFSVGLEPAEEMLLRVETALEAAGRVFLAQGSRKP.

The disordered stretch occupies residues 187 to 206 (RVGALPAAASTASPMGSSLP). Over residues 196–206 (STASPMGSSLP) the composition is skewed to polar residues.

This sequence belongs to the trans-sulfuration enzymes family. Requires pyridoxal 5'-phosphate as cofactor.

It catalyses the reaction L-alanine = D-alanine. The protein operates within secondary metabolite biosynthesis. In terms of biological role, alanine racemase; part of the gene cluster that mediates the biosynthesis of the unguisins, gamma-aminobutyric acid (GABA)-containing fungal cyclic heptapeptides with the amino acid sequence cyclo-(D-Ala1-D-Val2-L-Phe3-D-Val4-D-Ala5-D-Trp6-GABA7) for unguisin A and cyclo-(D-Ala1-D-Val2-L-Leu3-D-Val4-D-Ala5-D-Trp6-GABA7) for unguisin B. Within the pathway, the alanine racemase ungC catalyzes the interconversion of L-alanine and D-alanine, providing the D-alanine which is accepted by the first adenylation domain of the nonribosomal peptide synthetase (NRPS) ungA. UngA is the main enzyme within the cluster which condenses the 7 residues using its respective 7 modules. The terminal condensation domain (Ct) is involved in cyclization with D-alanine and thereby releasing of unguisins A and B. Finally, the hydrolase ungD catalyzes the hydrolysis between the D-tryptophan and GABA residues of unguisins A and B to produce the corresponding linear peptides. The chain is Alanine racemase ungC from Aspergillus violaceofuscus (strain CBS 115571).